The primary structure comprises 216 residues: Transmembrane emp24 domain-containing protein eca (216 aa).

A signal peptide spans 1–20 (MRDQFISLALILCVLHSACG). Topologically, residues 21-182 (LYFHISETER…FRHTSESTNS (162 aa)) are lumenal. The region spanning 30 to 126 (RKCFIEEVPD…QLRVHLDIQV (97 aa)) is the GOLD domain. Residues 134 to 164 (AHVAQKEKLTELQLRIRQLLDQVEQITKEQN) are a coiled coil. The helical transmembrane segment at 183 to 203 (RVLWWSLAQTVVLVCMGFWQM) threads the bilayer. The Cytoplasmic segment spans residues 204–216 (RHLKSFFEAKKLV). Positions 213–216 (KKLV) match the Prevents secretion from ER motif.

Belongs to the EMP24/GP25L family.

The protein localises to the endoplasmic reticulum membrane. In terms of biological role, eca and bai are essential, though not redundant, for dorsoventral patterning of the embryo. Specifically required during early embryogenesis for the activity of maternal tkv, while the zygotic tkv is not affected. Involved in Golgi organization. The chain is Transmembrane emp24 domain-containing protein eca from Drosophila melanogaster (Fruit fly).